We begin with the raw amino-acid sequence, 31 residues long: Cyclotide glopa C (31 aa).

The cyclopeptide (Gly-Asn) cross-link spans 1 to 31 (GDLPICGETCFEGGNCRIPGCTCVWPFCSKN). 3 disulfide bridges follow: Cys6–Cys21, Cys10–Cys23, and Cys16–Cys28.

This is a cyclic peptide.

In terms of biological role, probably participates in a plant defense mechanism. The protein is Cyclotide glopa C of Gloeospermum pauciflorum.